A 591-amino-acid chain; its full sequence is Aspartate--tRNA ligase (591 aa).

Residue E176 participates in L-aspartate binding. The segment at Q200 to K203 is aspartate. An L-aspartate-binding site is contributed by R222. Residues R222–E224 and Q231 each bind ATP. H450 is a binding site for L-aspartate. E484 contributes to the ATP binding site. L-aspartate is bound at residue R491. An ATP-binding site is contributed by G536–R539.

The protein belongs to the class-II aminoacyl-tRNA synthetase family. Type 1 subfamily. Homodimer.

The protein resides in the cytoplasm. It catalyses the reaction tRNA(Asp) + L-aspartate + ATP = L-aspartyl-tRNA(Asp) + AMP + diphosphate. Functionally, catalyzes the attachment of L-aspartate to tRNA(Asp) in a two-step reaction: L-aspartate is first activated by ATP to form Asp-AMP and then transferred to the acceptor end of tRNA(Asp). In Listeria monocytogenes serotype 4b (strain F2365), this protein is Aspartate--tRNA ligase.